The sequence spans 135 residues: Galectin-1 (135 aa).

An N-acetylalanine modification is found at alanine 2. A Galectin domain is found at 4–135 (GLVASNLNLK…DFKIKCVAFE (132 aa)). 2 positions are modified to N6-acetyllysine: lysine 13 and lysine 29. Serine 30 is modified (phosphoserine). A beta-D-galactoside-binding positions include 45–49 (HFNPR), histidine 53, asparagine 62, and 69–72 (WGAE). N6-acetyllysine; alternate is present on lysine 108. An N6-succinyllysine; alternate modification is found at lysine 108. Position 128 is an N6-acetyllysine (lysine 128).

As to quaternary structure, homodimer. Binds LGALS3BP. Interacts with CD2, CD3, CD4, CD6, CD7, CD43, ALCAM and CD45. Interacts with laminin (via poly-N-acetyllactosamine). Interacts with SUSD2. Interacts with cargo receptor TMED10; the interaction mediates the translocation from the cytoplasm into the ERGIC (endoplasmic reticulum-Golgi intermediate compartment) and thereby secretion.

It is found in the secreted. The protein resides in the extracellular space. It localises to the extracellular matrix. Its subcellular location is the cytoplasm. In terms of biological role, lectin that binds beta-galactoside and a wide array of complex carbohydrates. Plays a role in regulating apoptosis, cell proliferation and cell differentiation. Inhibits CD45 protein phosphatase activity and therefore the dephosphorylation of Lyn kinase. Strong inducer of T-cell apoptosis. The sequence is that of Galectin-1 (LGALS1) from Ovis aries (Sheep).